Reading from the N-terminus, the 259-residue chain is Ribosomal RNA small subunit methyltransferase A (259 aa).

Asn-13, Leu-15, Gly-40, Glu-61, Asp-85, and Asn-103 together coordinate S-adenosyl-L-methionine.

Belongs to the class I-like SAM-binding methyltransferase superfamily. rRNA adenine N(6)-methyltransferase family. RsmA subfamily.

It localises to the cytoplasm. It catalyses the reaction adenosine(1518)/adenosine(1519) in 16S rRNA + 4 S-adenosyl-L-methionine = N(6)-dimethyladenosine(1518)/N(6)-dimethyladenosine(1519) in 16S rRNA + 4 S-adenosyl-L-homocysteine + 4 H(+). Functionally, specifically dimethylates two adjacent adenosines (A1518 and A1519) in the loop of a conserved hairpin near the 3'-end of 16S rRNA in the 30S particle. May play a critical role in biogenesis of 30S subunits. This is Ribosomal RNA small subunit methyltransferase A from Neisseria meningitidis serogroup A / serotype 4A (strain DSM 15465 / Z2491).